The sequence spans 222 residues: Protein DEHYDRATION-INDUCED 19 homolog 6 (222 aa).

Residue S116 is modified to Phosphoserine.

The protein belongs to the Di19 family. Phosphorylated in vitro by CPK3 or CPK11. Expressed in seedlings, roots, leaves, stems, flowers and siliques.

The protein localises to the nucleus. In Arabidopsis thaliana (Mouse-ear cress), this protein is Protein DEHYDRATION-INDUCED 19 homolog 6 (DI19-6).